Consider the following 775-residue polypeptide: Hepatocyte growth factor-regulated tyrosine kinase substrate (775 aa).

A VHS domain is found at A15–P143. An FYVE-type zinc finger spans residues W160 to N220. Zn(2+) contacts are provided by C166, C169, C182, C185, C190, and C193. At K207 the chain carries N6-acetyllysine. Zn(2+)-binding residues include C212 and C215. Y216 carries the phosphotyrosine modification. The tract at residues A223–A319 is disordered. The interval G225 to R541 is interaction with SNX1. Residues Q258–K277 enclose the UIM domain. A compositionally biased stretch (polar residues) spans L307–A316. A phosphotyrosine mark is found at Y308, Y329, and Y334. Positions K338 to Q405 are disordered. The interval S443–R541 is interaction with SNAP25 and TRAK2. Positions L452–A570 are interaction with STAM. Residues A478–D775 form an interaction with NF2 region. Residue K549 is modified to N6-succinyllysine. A compositionally biased stretch (low complexity) spans P640 to A657. Disordered stretches follow at residues P640–S690 and Q719–D775. Residues Y658–S690 show a composition bias toward polar residues. The span at T744–G761 shows a compositional bias: pro residues.

As to quaternary structure, component of the ESCRT-0 complex composed of STAM or STAM2 and HGS. Part of a complex at least composed of HSG, STAM2 (or probably STAM) and EPS15. Interacts with STAM. Interacts with STAM2. Interacts with EPS15; the interaction is direct, calcium-dependent and inhibited by SNAP25. Identified in a complex with STAM and LITAF. Found in a complex with STAM and E3 ligase ITCH and DTX3L. Interacts with E3 ligase DTX3L; the interaction brings together STAM and HSG, promotes their recruitment to early endosomes and decreases STAM and HGS ubiquitination by ITCH. Interacts with NF2; the interaction is direct. Interacts with ubiquitin; the interaction is direct. Interacts with VPS37C. Interacts with SMAD1, SMAD2 and SMAD3. Interacts with TSG101; the interaction mediates the association with the ESCRT-I complex. Interacts with SNAP25; the interaction is direct and decreases with addition of increasing concentrations of free calcium. Interacts with SNX1; the interaction is direct. Component of a 550 kDa membrane complex at least composed of HGS and SNX1 but excluding EGFR. Interacts with TRAK1. Interacts with TRAK2. Component of the CART complex, at least composed of ACTN4, HGS/HRS, MYO5B and TRIM3. Interacts with ARRDC3. Identified in a complex containing at least ARRDC4, AVPR2 and HGS. Interacts (via UIM domain) with UBQLN1 (via ubiquitin-like domain). Interacts with LAPTM4B; promotes HGS ubiquitination. In terms of processing, phosphorylated on Tyr-334. This phosphorylation occurs in response to EGF. A minor site of phosphorylation on Tyr-329 is detected. Protein phosphorylation may also be triggered in response to IL-2, GM-CSF and HGF. Post-translationally, ubiquitinated by ITCH. In terms of tissue distribution, ubiquitous expression in adult and fetal tissues with higher expression in testis.

The protein localises to the cytoplasm. The protein resides in the early endosome membrane. Its subcellular location is the endosome. It localises to the multivesicular body membrane. Its function is as follows. Involved in intracellular signal transduction mediated by cytokines and growth factors. When associated with STAM, it suppresses DNA signaling upon stimulation by IL-2 and GM-CSF. Could be a direct effector of PI3-kinase in vesicular pathway via early endosomes and may regulate trafficking to early and late endosomes by recruiting clathrin. May concentrate ubiquitinated receptors within clathrin-coated regions. Involved in down-regulation of receptor tyrosine kinase via multivesicular body (MVBs) when complexed with STAM (ESCRT-0 complex). The ESCRT-0 complex binds ubiquitin and acts as a sorting machinery that recognizes ubiquitinated receptors and transfers them to further sequential lysosomal sorting/trafficking processes. May contribute to the efficient recruitment of SMADs to the activin receptor complex. Involved in receptor recycling via its association with the CART complex, a multiprotein complex required for efficient transferrin receptor recycling but not for EGFR degradation. This is Hepatocyte growth factor-regulated tyrosine kinase substrate (Hgs) from Mus musculus (Mouse).